Here is a 306-residue protein sequence, read N- to C-terminus: Putative dihydroorotate dehydrogenase A (fumarate) (306 aa).

Residues Ser20 and 44 to 45 (KG) each bind FMN. Substrate contacts are provided by residues Lys44 and 68 to 72 (NSIGL). The FMN site is built by Asn98 and Asn126. Asn126 contacts substrate. Residue Cys129 is the Nucleophile of the active site. The FMN site is built by Lys164 and Ile190. Residue 191–192 (NT) coordinates substrate. FMN is bound by residues Gly216, 244–245 (GG), and 266–267 (GT).

Belongs to the dihydroorotate dehydrogenase family. Type 1 subfamily. In terms of assembly, homodimer. FMN serves as cofactor.

It is found in the cytoplasm. It catalyses the reaction (S)-dihydroorotate + fumarate = orotate + succinate. The protein operates within pyrimidine metabolism; UMP biosynthesis via de novo pathway. Catalyzes the conversion of dihydroorotate to orotate with fumarate as the electron acceptor. The polypeptide is Putative dihydroorotate dehydrogenase A (fumarate) (pyrD) (Aquifex aeolicus (strain VF5)).